The primary structure comprises 79 residues: Conotoxin ArMSGL-0124 (79 aa).

The N-terminal stretch at 1-20 (MSRLGIMVLTLLLLVYMATS) is a signal peptide. The propeptide occupies 21–44 (HQDAGEKQATQRDAINFRWKRSLT). Cystine bridges form between Cys-52/Cys-64, Cys-56/Cys-73, and Cys-63/Cys-77. Leu-78 carries the leucine amide modification.

The protein belongs to the conotoxin O3 superfamily. As to expression, expressed by the venom duct.

The protein localises to the secreted. This chain is Conotoxin ArMSGL-0124, found in Conus arenatus (Sand-dusted cone).